A 223-amino-acid polypeptide reads, in one-letter code: 7-cyano-7-deazaguanine synthase (223 aa).

Residue 11 to 21 participates in ATP binding; sequence ISGGMDSALAA. Zn(2+) is bound by residues cysteine 189, cysteine 197, cysteine 200, and cysteine 203.

The protein belongs to the QueC family. Requires Zn(2+) as cofactor.

The catalysed reaction is 7-carboxy-7-deazaguanine + NH4(+) + ATP = 7-cyano-7-deazaguanine + ADP + phosphate + H2O + H(+). Its pathway is purine metabolism; 7-cyano-7-deazaguanine biosynthesis. Catalyzes the ATP-dependent conversion of 7-carboxy-7-deazaguanine (CDG) to 7-cyano-7-deazaguanine (preQ(0)). The protein is 7-cyano-7-deazaguanine synthase of Campylobacter fetus subsp. fetus (strain 82-40).